The primary structure comprises 98 residues: Co-chaperonin GroES (98 aa).

It belongs to the GroES chaperonin family. In terms of assembly, heptamer of 7 subunits arranged in a ring. Interacts with the chaperonin GroEL.

It localises to the cytoplasm. Its function is as follows. Together with the chaperonin GroEL, plays an essential role in assisting protein folding. The GroEL-GroES system forms a nano-cage that allows encapsulation of the non-native substrate proteins and provides a physical environment optimized to promote and accelerate protein folding. GroES binds to the apical surface of the GroEL ring, thereby capping the opening of the GroEL channel. This chain is Co-chaperonin GroES, found in Neorickettsia sennetsu (strain ATCC VR-367 / Miyayama) (Ehrlichia sennetsu).